The sequence spans 221 residues: Peptide methionine sulfoxide reductase MsrA (221 aa).

Residue C54 is part of the active site.

This sequence belongs to the MsrA Met sulfoxide reductase family.

It carries out the reaction L-methionyl-[protein] + [thioredoxin]-disulfide + H2O = L-methionyl-(S)-S-oxide-[protein] + [thioredoxin]-dithiol. The catalysed reaction is [thioredoxin]-disulfide + L-methionine + H2O = L-methionine (S)-S-oxide + [thioredoxin]-dithiol. Has an important function as a repair enzyme for proteins that have been inactivated by oxidation. Catalyzes the reversible oxidation-reduction of methionine sulfoxide in proteins to methionine. The chain is Peptide methionine sulfoxide reductase MsrA from Methylobacterium nodulans (strain LMG 21967 / CNCM I-2342 / ORS 2060).